The primary structure comprises 280 residues: Probable ketoamine kinase lp_1983 (280 aa).

ATP is bound at residue 87-89; it reads DWL. The active-site Proton acceptor is the Asp189.

The protein belongs to the fructosamine kinase family.

It carries out the reaction N(6)-(D-ribulosyl)-L-lysine + ATP = N(6)-(3-O-phospho-D-ribulosyl)-L-lysine + ADP + H(+). The enzyme catalyses N-(D-ribulosyl)-cadaverine + ATP = N-(3-O-phospho-D-ribulosyl)-cadaverine + ADP + H(+). It catalyses the reaction N(6)-(D-erythrulosyl)-L-lysine + ATP = N(6)-(3-O-phospho-D-erythrulosyl)-L-lysine + ADP + H(+). The catalysed reaction is N-(D-erythrulosyl)-cadaverine + ATP = N-(3-O-phospho-D-erythrulosyl)-cadaverine + ADP + H(+). It carries out the reaction N(6)-D-ribulosyl-L-lysyl-[protein] + ATP = N(6)-(3-O-phospho-D-ribulosyl)-L-lysyl-[protein] + ADP + H(+). The enzyme catalyses N(6)-(D-erythrulosyl)-L-lysyl-[protein] + ATP = N(6)-(3-O-phospho-D-erythrulosyl)-L-lysyl-[protein] + ADP + H(+). Ketoamine kinase that phosphorylates ketoamines, such as erythruloselysine, erythrulosecadaverine, ribuloselysine and ribulosecadaverine, on the third carbon of the sugar moiety to generate ketoamine 3-phosphate. Has higher activity on free lysine (erythruloselysine and ribuloselysine), than on ribuloselysine and erythruloselysine residues on glycated proteins. The protein is Probable ketoamine kinase lp_1983 of Lactiplantibacillus plantarum (strain ATCC BAA-793 / NCIMB 8826 / WCFS1) (Lactobacillus plantarum).